A 77-amino-acid chain; its full sequence is Putative neurotoxin 1 (77 aa).

Positions 1–25 (MKAFIAILSIAIVLLLIVSIKETSA) are cleaved as a signal peptide. Positions 26-46 (KDCKQECVKRYTKGDLTNFLK) are excised as a propeptide.

It belongs to the scolopendra neurotoxin 3 family. Contains 2 disulfide bonds. In terms of tissue distribution, expressed by the venom gland.

Its subcellular location is the secreted. The protein is Putative neurotoxin 1 of Scolopendra mutilans (Chinese red-headed centipede).